Consider the following 271-residue polypeptide: Proteasome inhibitor PI31 subunit (271 aa).

An N-acetylalanine modification is found at alanine 2. Residues 2 to 150 (AGLEVLFASA…PIHEQWEKAN (149 aa)) form an important for homodimerization and interaction with FBXO7 region. A Phosphoserine modification is found at serine 153. Arginine 205 is modified (omega-N-methylarginine). At arginine 219 the chain carries Asymmetric dimethylarginine. The segment at 222–271 (IDPSSGLPNRLPPGAVPPGARFDPFGPIGTSPPGPNPDHLPPPGYDDMYL) is disordered. Residue arginine 231 is modified to Omega-N-methylarginine. Positions 251–265 (TSPPGPNPDHLPPPG) are enriched in pro residues. Phosphoserine is present on serine 252.

It belongs to the proteasome inhibitor PI31 family. In terms of assembly, monomer and homodimer. Interacts with FBXO7.

It localises to the cytoplasm. The protein resides in the endoplasmic reticulum. In terms of biological role, plays an important role in control of proteasome function. Inhibits the hydrolysis of protein and peptide substrates by the 20S proteasome. Also inhibits the activation of the proteasome by the proteasome regulatory proteins PA700 and PA28. This Pongo abelii (Sumatran orangutan) protein is Proteasome inhibitor PI31 subunit (PSMF1).